The primary structure comprises 314 residues: Dual specificity protein phosphatase 2 (314 aa).

One can recognise a Rhodanese domain in the interval 23–144 (EAERTLLLDC…FQGCCPDLCS (122 aa)). In terms of domain architecture, Tyrosine-protein phosphatase spans 172-313 (GPVEILPYLF…LLQFETQVLC (142 aa)). Cys-257 (phosphocysteine intermediate) is an active-site residue.

Belongs to the protein-tyrosine phosphatase family. Non-receptor class dual specificity subfamily. In terms of assembly, interacts with MAPK14; this interaction does not lead to catalytic activation of DUSP2 and dephosphrylation of MAPK14. Expressed in hematopoietic tissues.

Its subcellular location is the nucleus. The catalysed reaction is O-phospho-L-tyrosyl-[protein] + H2O = L-tyrosyl-[protein] + phosphate. It carries out the reaction O-phospho-L-threonyl-[protein] + H2O = L-threonyl-[protein] + phosphate. Dephosphorylates both phosphorylated Thr and Tyr residues in MAPK1, and dephosphorylation of phosphotyrosine is slightly faster than that of phosphothreonine. Can dephosphorylate MAPK1. The polypeptide is Dual specificity protein phosphatase 2 (Homo sapiens (Human)).